Consider the following 429-residue polypeptide: Glucose-1-phosphate adenylyltransferase (429 aa).

Alpha-D-glucose 1-phosphate-binding positions include Gly162, 177 to 178 (EK), and Ser209.

It belongs to the bacterial/plant glucose-1-phosphate adenylyltransferase family. Homotetramer.

It carries out the reaction alpha-D-glucose 1-phosphate + ATP + H(+) = ADP-alpha-D-glucose + diphosphate. It functions in the pathway glycan biosynthesis; glycogen biosynthesis. Its function is as follows. Involved in the biosynthesis of ADP-glucose, a building block required for the elongation reactions to produce glycogen. Catalyzes the reaction between ATP and alpha-D-glucose 1-phosphate (G1P) to produce pyrophosphate and ADP-Glc. The chain is Glucose-1-phosphate adenylyltransferase from Picosynechococcus sp. (strain ATCC 27264 / PCC 7002 / PR-6) (Agmenellum quadruplicatum).